Consider the following 74-residue polypeptide: Conotoxin Cal27 (74 aa).

An N-terminal signal peptide occupies residues Met1–Ala19.

May contain 4 disulfide bonds. As to expression, expressed by the venom duct.

Its subcellular location is the secreted. Functionally, probable neurotoxin. This is Conotoxin Cal27 from Californiconus californicus (California cone).